The primary structure comprises 366 residues: Chorismate synthase (366 aa).

Arg48 contributes to the NADP(+) binding site. FMN is bound by residues 125–127 (RSS), 238–239 (NA), Gly278, 293–297 (KPTSS), and Arg319.

The protein belongs to the chorismate synthase family. In terms of assembly, homotetramer. FMNH2 serves as cofactor.

The catalysed reaction is 5-O-(1-carboxyvinyl)-3-phosphoshikimate = chorismate + phosphate. The protein operates within metabolic intermediate biosynthesis; chorismate biosynthesis; chorismate from D-erythrose 4-phosphate and phosphoenolpyruvate: step 7/7. Its function is as follows. Catalyzes the anti-1,4-elimination of the C-3 phosphate and the C-6 proR hydrogen from 5-enolpyruvylshikimate-3-phosphate (EPSP) to yield chorismate, which is the branch point compound that serves as the starting substrate for the three terminal pathways of aromatic amino acid biosynthesis. This reaction introduces a second double bond into the aromatic ring system. The sequence is that of Chorismate synthase from Hydrogenovibrio crunogenus (strain DSM 25203 / XCL-2) (Thiomicrospira crunogena).